Reading from the N-terminus, the 344-residue chain is Cell division protein ZipA (344 aa).

Residues 1–6 (MEDLQL) lie on the Periplasmic side of the membrane. Residues 7-27 (VLFVLGAIAIVAVLVHGFWSI) traverse the membrane as a helical segment. Residues 28-344 (RRQQPKSLKD…DYLHRIRANA (317 aa)) lie on the Cytoplasmic side of the membrane. Disordered stretches follow at residues 75 to 94 (VRKA…PYLK) and 108 to 139 (QFKQ…ASRQ).

It belongs to the ZipA family. As to quaternary structure, interacts with FtsZ via their C-terminal domains.

It localises to the cell inner membrane. Essential cell division protein that stabilizes the FtsZ protofilaments by cross-linking them and that serves as a cytoplasmic membrane anchor for the Z ring. Also required for the recruitment to the septal ring of downstream cell division proteins. The polypeptide is Cell division protein ZipA (Shewanella oneidensis (strain ATCC 700550 / JCM 31522 / CIP 106686 / LMG 19005 / NCIMB 14063 / MR-1)).